Consider the following 511-residue polypeptide: GMP synthase [glutamine-hydrolyzing] (511 aa).

Positions 5 to 195 constitute a Glutamine amidotransferase type-1 domain; sequence DILVLDFGSQ…AKYACNCESV (191 aa). C82 functions as the Nucleophile in the catalytic mechanism. Catalysis depends on residues H169 and E171. Positions 196–386 constitute a GMPS ATP-PPase domain; the sequence is WNMGSFAKTQ…LGLSKEVVYR (191 aa). Residue 223–229 participates in ATP binding; that stretch reads SGGVDSS.

In terms of assembly, homodimer.

It carries out the reaction XMP + L-glutamine + ATP + H2O = GMP + L-glutamate + AMP + diphosphate + 2 H(+). The protein operates within purine metabolism; GMP biosynthesis; GMP from XMP (L-Gln route): step 1/1. Functionally, catalyzes the synthesis of GMP from XMP. The polypeptide is GMP synthase [glutamine-hydrolyzing] (Campylobacter jejuni subsp. doylei (strain ATCC BAA-1458 / RM4099 / 269.97)).